The sequence spans 131 residues: MRHYEIVFMVHPDQSEQVPGMIERYTGAITGAEGKIHRLEDWGRRQLAYSINKLHKAHYVLMNVEASQEVIDELETNFRYNDAVIRSMVMRTKHAVTEASPMVKAKDERRERREDFANETSEETEAGDSEE.

Residues glutamate 98–glutamate 131 are disordered. Basic and acidic residues predominate over residues lysine 104–phenylalanine 116. The segment covering threonine 120–glutamate 131 has biased composition (acidic residues).

Belongs to the bacterial ribosomal protein bS6 family.

Functionally, binds together with bS18 to 16S ribosomal RNA. This Edwardsiella ictaluri (strain 93-146) protein is Small ribosomal subunit protein bS6.